We begin with the raw amino-acid sequence, 223 residues long: ATP-dependent dethiobiotin synthetase BioD (223 aa).

Threonine 16 provides a ligand contact to Mg(2+). The active site involves lysine 37. Residue serine 41 participates in substrate binding. Mg(2+) contacts are provided by aspartate 50 and glutamate 111. ATP is bound by residues aspartate 50, 111–114, and 171–172; these read EGAG and NR.

The protein belongs to the dethiobiotin synthetase family. Homodimer. Mg(2+) is required as a cofactor.

The protein localises to the cytoplasm. The catalysed reaction is (7R,8S)-7,8-diammoniononanoate + CO2 + ATP = (4R,5S)-dethiobiotin + ADP + phosphate + 3 H(+). The protein operates within cofactor biosynthesis; biotin biosynthesis; biotin from 7,8-diaminononanoate: step 1/2. Catalyzes a mechanistically unusual reaction, the ATP-dependent insertion of CO2 between the N7 and N8 nitrogen atoms of 7,8-diaminopelargonic acid (DAPA, also called 7,8-diammoniononanoate) to form a ureido ring. The chain is ATP-dependent dethiobiotin synthetase BioD from Anaeromyxobacter sp. (strain K).